Here is a 184-residue protein sequence, read N- to C-terminus: ATP synthase subunit b, chloroplastic (184 aa).

Residues 27–49 (LATNPINLSVVLGVLIFFGKGVL) form a helical membrane-spanning segment.

The protein belongs to the ATPase B chain family. As to quaternary structure, F-type ATPases have 2 components, F(1) - the catalytic core - and F(0) - the membrane proton channel. F(1) has five subunits: alpha(3), beta(3), gamma(1), delta(1), epsilon(1). F(0) has four main subunits: a(1), b(1), b'(1) and c(10-14). The alpha and beta chains form an alternating ring which encloses part of the gamma chain. F(1) is attached to F(0) by a central stalk formed by the gamma and epsilon chains, while a peripheral stalk is formed by the delta, b and b' chains.

It is found in the plastid. Its subcellular location is the chloroplast thylakoid membrane. In terms of biological role, f(1)F(0) ATP synthase produces ATP from ADP in the presence of a proton or sodium gradient. F-type ATPases consist of two structural domains, F(1) containing the extramembraneous catalytic core and F(0) containing the membrane proton channel, linked together by a central stalk and a peripheral stalk. During catalysis, ATP synthesis in the catalytic domain of F(1) is coupled via a rotary mechanism of the central stalk subunits to proton translocation. Its function is as follows. Component of the F(0) channel, it forms part of the peripheral stalk, linking F(1) to F(0). This chain is ATP synthase subunit b, chloroplastic, found in Pelargonium hortorum (Common geranium).